A 431-amino-acid chain; its full sequence is Serine hydroxymethyltransferase (431 aa).

(6S)-5,6,7,8-tetrahydrofolate is bound by residues leucine 128 and 132–134 (GHL). Lysine 237 carries the post-translational modification N6-(pyridoxal phosphate)lysine.

It belongs to the SHMT family. In terms of assembly, homodimer. Pyridoxal 5'-phosphate serves as cofactor.

It is found in the cytoplasm. It carries out the reaction (6R)-5,10-methylene-5,6,7,8-tetrahydrofolate + glycine + H2O = (6S)-5,6,7,8-tetrahydrofolate + L-serine. The protein operates within one-carbon metabolism; tetrahydrofolate interconversion. Its pathway is amino-acid biosynthesis; glycine biosynthesis; glycine from L-serine: step 1/1. In terms of biological role, catalyzes the reversible interconversion of serine and glycine with tetrahydrofolate (THF) serving as the one-carbon carrier. This reaction serves as the major source of one-carbon groups required for the biosynthesis of purines, thymidylate, methionine, and other important biomolecules. Also exhibits THF-independent aldolase activity toward beta-hydroxyamino acids, producing glycine and aldehydes, via a retro-aldol mechanism. In Ruegeria pomeroyi (strain ATCC 700808 / DSM 15171 / DSS-3) (Silicibacter pomeroyi), this protein is Serine hydroxymethyltransferase.